Consider the following 659-residue polypeptide: Exoribonuclease 2 (659 aa).

An RNB domain is found at 189-532 (REDLTHLYFT…HRLIKQVLSN (344 aa)). The S1 motif domain maps to 576–658 (NVEFDGEIQD…ETRSVVGDVL (83 aa)).

Belongs to the RNR ribonuclease family. RNase II subfamily.

It localises to the cytoplasm. The enzyme catalyses Exonucleolytic cleavage in the 3'- to 5'-direction to yield nucleoside 5'-phosphates.. Its function is as follows. Involved in mRNA degradation. Hydrolyzes single-stranded polyribonucleotides processively in the 3' to 5' direction. This chain is Exoribonuclease 2, found in Glaesserella parasuis serovar 5 (strain SH0165) (Haemophilus parasuis).